A 1057-amino-acid chain; its full sequence is Protein transport protein Sec16B (1057 aa).

The span at 1 to 15 (MELWVPQTQGRTTGP) shows a compositional bias: polar residues. The tract at residues 1–86 (MELWVPQTQG…VSGADYLKGS (86 aa)) is disordered. The segment covering 45–63 (QDTHKNSKPQQDPRDDHQQ) has biased composition (basic and acidic residues). A phosphoserine mark is found at Ser-70, Ser-137, Ser-161, and Ser-185. The interval 185 to 220 (SAFGLEQPGEFFPESGAQKQKPSLTSKSNLLQQHES) is disordered. A compositionally biased stretch (polar residues) spans 201-213 (AQKQKPSLTSKSN). Residue Ser-245 is modified to Phosphoserine. The segment at 263–708 (APMRFYVPHV…KHKELEQTRT (446 aa)) is central conserved domain (CCD); required for localization to endoplasmic reticulum exit sites. Positions 704–715 (EQTRTGDLRDPD) are enriched in basic and acidic residues. 2 disordered regions span residues 704–778 (EQTR…TYSE) and 849–1057 (AVIS…SQPC). Positions 737–764 (GQQNYSEDSEYSSALWPTSEQTSLTNPT) are enriched in polar residues. Residue Thr-856 is modified to Phosphothreonine. 4 positions are modified to phosphoserine: Ser-866, Ser-869, Ser-872, and Ser-881. Over residues 883–903 (GADKPPHPDASQKEKLRDGKN) the composition is skewed to basic and acidic residues. The segment covering 906-926 (SSGFGWFSWFRSKPASSVSTS) has biased composition (low complexity). Acidic residues predominate over residues 927-938 (GDEDSVDSSDSE). Over residues 990–999 (EGVGIGGFSG) the composition is skewed to gly residues. Residues 1028-1043 (NPSQVPQLPTASSLNR) are compositionally biased toward polar residues.

The protein belongs to the SEC16 family. SEC16A and SEC16B are each present in multiple copies in a heteromeric complex. Interacts with TFG. Interacts with SEC13. In terms of tissue distribution, liver, kidney, heart, spleen and brain.

Its subcellular location is the endoplasmic reticulum membrane. The protein localises to the golgi apparatus membrane. Plays a role in the organization of the endoplasmic reticulum exit sites (ERES), also known as transitional endoplasmic reticulum (tER). Required for secretory cargo traffic from the endoplasmic reticulum to the Golgi apparatus. Involved in peroxisome biogenesis. Regulates the transport of peroxisomal biogenesis factors PEX3 and PEX16 from the ER to peroxisomes. This Rattus norvegicus (Rat) protein is Protein transport protein Sec16B (Sec16b).